Consider the following 368-residue polypeptide: L-arabinitol 4-dehydrogenase (368 aa).

Zn(2+) contacts are provided by Cys-52, His-77, Glu-78, Cys-107, Cys-110, Cys-113, Cys-121, and Glu-162. NAD(+) contacts are provided by Asp-210, Arg-215, and Ile-282.

Belongs to the zinc-containing alcohol dehydrogenase family. Homotetramer. Zn(2+) is required as a cofactor.

It carries out the reaction L-arabinitol + NAD(+) = L-xylulose + NADH + H(+). Functionally, plays a key role in liamocins biosynthesis by providing the arabinol moity that is linked to 3,5-dihydroxydecanoic acid (provided by the HR-PKS PKS1) via ester bond formation catalyzed by the esterase EST1. The chain is L-arabinitol 4-dehydrogenase from Aureobasidium melanogenum (Aureobasidium pullulans var. melanogenum).